The sequence spans 231 residues: Cytochrome c oxidase subunit 2 (231 aa).

Residues 1-30 lie on the Mitochondrial intermembrane side of the membrane; it reads MNNFFQGYNLLFQHSLFASYMDWFHAFNCS. Residues 31 to 51 form a helical membrane-spanning segment; it reads LLLGVLVFVTLLFGYLIFSTF. Residues 52-64 lie on the Mitochondrial matrix side of the membrane; the sequence is YFKSKKIEYQFGE. Residues 65–85 traverse the membrane as a helical segment; it reads LLCSIFPTIILLMQMVPSLSL. Residues 86 to 231 are Mitochondrial intermembrane-facing; sequence LYYYGLMNLD…FKSWCFGTME (146 aa). The Cu cation site is built by His164, Cys199, Glu201, Cys203, His207, and Met210. Glu201 is a Mg(2+) binding site.

The protein belongs to the cytochrome c oxidase subunit 2 family. In terms of assembly, component of the cytochrome c oxidase (complex IV, CIV), a multisubunit enzyme composed of a catalytic core of 3 subunits and several supernumerary subunits. The complex exists as a monomer or a dimer and forms supercomplexes (SCs) in the inner mitochondrial membrane with ubiquinol-cytochrome c oxidoreductase (cytochrome b-c1 complex, complex III, CIII). Requires Cu cation as cofactor.

The protein localises to the mitochondrion inner membrane. The enzyme catalyses 4 Fe(II)-[cytochrome c] + O2 + 8 H(+)(in) = 4 Fe(III)-[cytochrome c] + 2 H2O + 4 H(+)(out). Component of the cytochrome c oxidase, the last enzyme in the mitochondrial electron transport chain which drives oxidative phosphorylation. The respiratory chain contains 3 multisubunit complexes succinate dehydrogenase (complex II, CII), ubiquinol-cytochrome c oxidoreductase (cytochrome b-c1 complex, complex III, CIII) and cytochrome c oxidase (complex IV, CIV), that cooperate to transfer electrons derived from NADH and succinate to molecular oxygen, creating an electrochemical gradient over the inner membrane that drives transmembrane transport and the ATP synthase. Cytochrome c oxidase is the component of the respiratory chain that catalyzes the reduction of oxygen to water. Electrons originating from reduced cytochrome c in the intermembrane space (IMS) are transferred via the dinuclear copper A center (CU(A)) of subunit 2 and heme A of subunit 1 to the active site in subunit 1, a binuclear center (BNC) formed by heme A3 and copper B (CU(B)). The BNC reduces molecular oxygen to 2 water molecules using 4 electrons from cytochrome c in the IMS and 4 protons from the mitochondrial matrix. This Caenorhabditis briggsae protein is Cytochrome c oxidase subunit 2 (cox-2).